A 94-amino-acid polypeptide reads, in one-letter code: Integration host factor subunit beta (94 aa).

The protein belongs to the bacterial histone-like protein family. As to quaternary structure, heterodimer of an alpha and a beta chain.

Functionally, this protein is one of the two subunits of integration host factor, a specific DNA-binding protein that functions in genetic recombination as well as in transcriptional and translational control. This chain is Integration host factor subunit beta, found in Sodalis glossinidius (strain morsitans).